We begin with the raw amino-acid sequence, 483 residues long: Adenylyltransferase and sulfurtransferase uba4 (483 aa).

Residues Gly100, Asp121, 128 to 132, Lys145, and 178 to 179 each bind ATP; these read SNLHR and DN. The Zn(2+) site is built by Cys227 and Cys230. The active-site Glycyl thioester intermediate; for adenylyltransferase activity is the Cys244. Zn(2+) contacts are provided by Cys306 and Cys309. The region spanning 366 to 481 is the Rhodanese domain; the sequence is ISKEPTIIDV…WREQIDPDWP (116 aa). Residue Cys436 is the Cysteine persulfide intermediate; for sulfurtransferase activity of the active site.

This sequence in the N-terminal section; belongs to the HesA/MoeB/ThiF family. UBA4 subfamily. It depends on Zn(2+) as a cofactor.

It is found in the cytoplasm. The protein localises to the cytosol. The enzyme catalyses [molybdopterin-synthase sulfur-carrier protein]-C-terminal Gly-Gly + ATP + H(+) = [molybdopterin-synthase sulfur-carrier protein]-C-terminal Gly-Gly-AMP + diphosphate. It carries out the reaction [molybdopterin-synthase sulfur-carrier protein]-C-terminal Gly-Gly-AMP + S-sulfanyl-L-cysteinyl-[cysteine desulfurase] + AH2 = [molybdopterin-synthase sulfur-carrier protein]-C-terminal-Gly-aminoethanethioate + L-cysteinyl-[cysteine desulfurase] + A + AMP + 2 H(+). It functions in the pathway tRNA modification; 5-methoxycarbonylmethyl-2-thiouridine-tRNA biosynthesis. Functionally, plays a central role in 2-thiolation of mcm(5)S(2)U at tRNA wobble positions of cytosolic tRNA(Lys), tRNA(Glu) and tRNA(Gln). Also essential during biosynthesis of the molybdenum cofactor. Acts by mediating the C-terminal thiocarboxylation of sulfur carriers urm1 and mocs2a. Its N-terminus first activates urm1 and mocs2a as acyl-adenylates (-COAMP), then the persulfide sulfur on the catalytic cysteine is transferred to urm1 and mocs2a to form thiocarboxylation (-COSH) of their C-terminus. The reaction probably involves hydrogen sulfide that is generated from the persulfide intermediate and that acts as a nucleophile towards urm1 and mocs2a. Subsequently, a transient disulfide bond is formed. Does not use thiosulfate as sulfur donor; nfs1 probably acting as a sulfur donor for thiocarboxylation reactions. The polypeptide is Adenylyltransferase and sulfurtransferase uba4 (Neosartorya fischeri (strain ATCC 1020 / DSM 3700 / CBS 544.65 / FGSC A1164 / JCM 1740 / NRRL 181 / WB 181) (Aspergillus fischerianus)).